Consider the following 91-residue polypeptide: Acyl-CoA-binding domain-containing protein 1 (91 aa).

In terms of domain architecture, ACB spans Leu-3–Ala-88. Residues Lys-15, Tyr-30–Lys-34, Lys-56, and Tyr-75 contribute to the an acyl-CoA site.

This sequence belongs to the ACBP family. In terms of tissue distribution, highly expressed in leaves. Expressed at low levels in roots and seeds.

Its subcellular location is the cytoplasm. The protein localises to the cytosol. Binds medium- and long-chain acyl-CoA esters with high affinity. Can interact in vitro with palmitoyl-CoA, oleoyl-CoA, linoleoyl-CoA and linolenoyl-CoA. Binds phosphatidic acid (PA) and phosphatidylcholine (PC) in vitro. May play a role in the biosynthesis of phospholipids. This Oryza sativa subsp. japonica (Rice) protein is Acyl-CoA-binding domain-containing protein 1.